The primary structure comprises 462 residues: CUGBP Elav-like family member 3-B (462 aa).

3 RRM domains span residues 7–88 (IKLF…PADS), 95–175 (RKLF…FADT), and 377–455 (CNIF…LKRP).

It belongs to the CELF/BRUNOL family.

Its subcellular location is the nucleus. It is found in the cytoplasm. Its function is as follows. RNA-binding protein that may be involved in the regulation of pre-mRNA alternative splicing. The sequence is that of CUGBP Elav-like family member 3-B (tnrc4-b) from Xenopus laevis (African clawed frog).